The following is a 170-amino-acid chain: Probable chemoreceptor glutamine deamidase CheD 3 (170 aa).

It belongs to the CheD family.

It catalyses the reaction L-glutaminyl-[protein] + H2O = L-glutamyl-[protein] + NH4(+). Functionally, probably deamidates glutamine residues to glutamate on methyl-accepting chemotaxis receptors (MCPs), playing an important role in chemotaxis. The sequence is that of Probable chemoreceptor glutamine deamidase CheD 3 from Dechloromonas aromatica (strain RCB).